A 177-amino-acid polypeptide reads, in one-letter code: Nucleoside triphosphate/diphosphate phosphatase (177 aa).

The Proton donor role is filled by arginine 23. Residues asparagine 87, aspartate 103, aspartate 105, aspartate 107, aspartate 120, and glutamate 123 each coordinate Mg(2+).

This sequence belongs to the Ntdp family. It depends on Mg(2+) as a cofactor.

It carries out the reaction a ribonucleoside 5'-triphosphate + H2O = a ribonucleoside 5'-diphosphate + phosphate + H(+). It catalyses the reaction a ribonucleoside 5'-diphosphate + H2O = a ribonucleoside 5'-phosphate + phosphate + H(+). Functionally, has nucleoside phosphatase activity towards nucleoside triphosphates and nucleoside diphosphates. The polypeptide is Nucleoside triphosphate/diphosphate phosphatase (Streptococcus thermophilus (strain ATCC BAA-491 / LMD-9)).